A 473-amino-acid chain; its full sequence is Photosystem II CP43 reaction center protein (473 aa).

Residues 1-14 (MKTLYSLRRFYHVE) constitute a propeptide that is removed on maturation. At T15 the chain carries N-acetylthreonine. Position 15 is a phosphothreonine (T15). Transmembrane regions (helical) follow at residues 69–93 (LFEV…PHLA), 134–155 (LLGP…KDRN), 178–200 (KALY…RKIT), 255–275 (KPFA…LSYS), and 291–312 (WFNN…ASQA). Residue E367 coordinates [CaMn4O5] cluster. Residues 447–471 (RARAAAAGFEKGIDRDFEPVLSMTP) traverse the membrane as a helical segment.

It belongs to the PsbB/PsbC family. PsbC subfamily. PSII is composed of 1 copy each of membrane proteins PsbA, PsbB, PsbC, PsbD, PsbE, PsbF, PsbH, PsbI, PsbJ, PsbK, PsbL, PsbM, PsbT, PsbX, PsbY, PsbZ, Psb30/Ycf12, at least 3 peripheral proteins of the oxygen-evolving complex and a large number of cofactors. It forms dimeric complexes. The cofactor is Binds multiple chlorophylls and provides some of the ligands for the Ca-4Mn-5O cluster of the oxygen-evolving complex. It may also provide a ligand for a Cl- that is required for oxygen evolution. PSII binds additional chlorophylls, carotenoids and specific lipids..

The protein localises to the plastid. Its subcellular location is the chloroplast thylakoid membrane. One of the components of the core complex of photosystem II (PSII). It binds chlorophyll and helps catalyze the primary light-induced photochemical processes of PSII. PSII is a light-driven water:plastoquinone oxidoreductase, using light energy to abstract electrons from H(2)O, generating O(2) and a proton gradient subsequently used for ATP formation. The sequence is that of Photosystem II CP43 reaction center protein from Draba nemorosa (Woodland whitlowgrass).